Consider the following 628-residue polypeptide: Venom redulysin 1 (628 aa).

A signal peptide spans 1-19; that stretch reads MSKLWLLLLLVAAFQAVHS. The propeptide occupies 20–368; sequence YPAAESDYLE…EDDVAESDEE (349 aa). The segment at 290–313 is disordered; sequence DYEEEEEEEEEEEFELEEDYEEDP. Acidic residues predominate over residues 291 to 313; the sequence is YEEEEEEEEEEEFELEEDYEEDP.

Belongs to the redulysin-like family. Post-translationally, contains 5 disulfide bonds. In terms of tissue distribution, expressed by the venom gland (posterior main gland) (at protein level).

The protein resides in the secreted. Its function is as follows. Highly abundant protein that may be responsible for the observed disruption of sensory neuron membranes, since it is homologous to proteins such as trialysin, which forms pores in lipid bilayers. Probable insecticidal toxin. The chain is Venom redulysin 1 from Platymeris rhadamanthus (Red spot assassin bug).